Here is a 515-residue protein sequence, read N- to C-terminus: MTVTYAHEPFTDFTEAKNKTAFGESLAFVNTQLGKHYPLVINGEKIETDRKIISINPANKEEIIGYASTADQELAEKAMQAALQAFDSWKKQRPEHRANILFKAAAILRRRKHEFSSYLVKEAGKPWKEADADTAEAIDFLEFYARQMLKLKEGAPVKSRAGEVNQYHYEALGVGIVISPFNFPLAIMAGTAVAAIVTGNTILLKPADAAPVVAAKFVEVMEEAGLPNGVLNYIPGDGAEIGDFLVEHPKTRFVSFTGSRAVGCRIYERAAKVQPGQKWLKRVIAEMGGKDTVLVDKDADLDLAASSIVYSAFGYSGQKCSAGSRAVIHQDVYDEVVEKAVALTKTLTVGNPEDPDTYMGPVIHEASYNKVMKYIEIGKSEGKLLAGGEGDDSKGYFIQPTIFADVDENARLMQEEIFGPVVAICKARDFDHMLEIANNTEYGLTGALLTKNRAHIERAREDFHVGNLYFNRGCTGAIVGYQPFGGFNMSGTDSKAGGPDYLILHMQAKTTSEAF.

Active-site residues include Glu286 and Cys320.

Belongs to the aldehyde dehydrogenase family. RocA subfamily.

The catalysed reaction is L-glutamate 5-semialdehyde + NAD(+) + H2O = L-glutamate + NADH + 2 H(+). It participates in amino-acid degradation; L-proline degradation into L-glutamate; L-glutamate from L-proline: step 2/2. This Bacillus subtilis (strain 168) protein is 1-pyrroline-5-carboxylate dehydrogenase (rocA).